The primary structure comprises 1418 residues: Ankyrin repeat and fibronectin type-III domain-containing protein 1 (1418 aa).

A disordered region spans residues 119–236 (RDSVCSLPPP…DRGETPSLSE (118 aa)). Positions 144–154 (PENTSINLSQC) are enriched in polar residues. The span at 171 to 186 (SASPTSSTPLRTTSTP) shows a compositional bias: low complexity. Residues 223 to 236 (LRDHDRGETPSLSE) show a composition bias toward basic and acidic residues. 2 ANK repeats span residues 419 to 450 (QSSEALFEAVEQQDLDAVQILLFQYTADELDL) and 456 to 485 (EGLTPLDISIMTNNVPIAKLLLKAGGKESP). Residues 556 to 652 (APLMVRLSVT…LSQPPSAVPS (97 aa)) form the Fibronectin type-III domain. The highly conserved peptide sequence stretch occupies residues 893–900 (GLYLGYLK). Disordered stretches follow at residues 1134-1179 (VQKN…EVFL), 1321-1343 (LETPLSIPHSPTTSYSLDEYRQP), and 1361-1418 (KTSP…SSTL). Polar residues predominate over residues 1136 to 1146 (KNDSTSSNTDY). The span at 1407–1418 (NEQVSEILSSTL) shows a compositional bias: polar residues.

In terms of biological role, required for vestibular-related functions. The chain is Ankyrin repeat and fibronectin type-III domain-containing protein 1 (ankfn1) from Danio rerio (Zebrafish).